Reading from the N-terminus, the 334-residue chain is MNLVSLESFLDNTAFLVLLLTMFAYWVAVVFPKPWLVQGASGAMAIANLTITALLGARWLEAGYFPISNLYESLFFLAWGITAVHFIAERMSQSRFVGAVTSPIALGIVAFAALTLPVDMQQSAPLVPALKSNWLMMHVSVMMVSYATLMVGSLLAIAFLFVTRGQAVELRGSSVGTGGFRQGLVKGNNLNPVGNLNPALEGVSGNSGNVAVLEKTTSTPAITLSPQRLTLADTLDNISYRIIGLGFPLLTIGIIAGAVWANEAWGSYWSWDPKETWALITWLVFAAYLHARITKGWQGRKPAILAASGFTVVWICYLGVNLLGKGLHSYGWFL.

The next 8 helical transmembrane spans lie at 12 to 32 (NTAFLVLLLTMFAYWVAVVFP), 35 to 55 (WLVQGASGAMAIANLTITALL), 67 to 87 (ISNLYESLFFLAWGITAVHFI), 96 to 116 (FVGAVTSPIALGIVAFAALTL), 141 to 161 (VMMVSYATLMVGSLLAIAFLF), 242 to 262 (IIGLGFPLLTIGIIAGAVWAN), 277 to 297 (WALITWLVFAAYLHARITKGW), and 303 to 323 (AILAASGFTVVWICYLGVNLL).

This sequence belongs to the CcmF/CycK/Ccl1/NrfE/CcsA family. In terms of assembly, may interact with ccs1.

Its subcellular location is the cellular thylakoid membrane. In terms of biological role, required during biogenesis of c-type cytochromes (cytochrome c6 and cytochrome f) at the step of heme attachment. This Synechocystis sp. (strain ATCC 27184 / PCC 6803 / Kazusa) protein is Cytochrome c biogenesis protein CcsA.